The sequence spans 108 residues: UPF0060 membrane protein BLi00854/BL03049 (108 aa).

4 consecutive transmembrane segments (helical) span residues 3-23 (IAIGLFLLAGLAEIAGGYLVW), 31-51 (PLWYGLAGGLTLIIYGVIPAF), 60-80 (VYAAYGGVFIILAVLWGWLVD), and 86-106 (LYDWAGAVICLAGVSVMLWAP).

It belongs to the UPF0060 family.

The protein localises to the cell membrane. This Bacillus licheniformis (strain ATCC 14580 / DSM 13 / JCM 2505 / CCUG 7422 / NBRC 12200 / NCIMB 9375 / NCTC 10341 / NRRL NRS-1264 / Gibson 46) protein is UPF0060 membrane protein BLi00854/BL03049.